The following is a 338-amino-acid chain: Glycerol-3-phosphate dehydrogenase [NAD(P)+] (338 aa).

Residues S13, W14, and K108 each contribute to the NADPH site. Residues K108, G139, and S141 each coordinate sn-glycerol 3-phosphate. A143 serves as a coordination point for NADPH. Residues K194, D247, S257, R258, and N259 each contribute to the sn-glycerol 3-phosphate site. Catalysis depends on K194, which acts as the Proton acceptor. Position 258 (R258) interacts with NADPH. Residues V282 and E284 each contribute to the NADPH site.

It belongs to the NAD-dependent glycerol-3-phosphate dehydrogenase family.

Its subcellular location is the cytoplasm. The enzyme catalyses sn-glycerol 3-phosphate + NAD(+) = dihydroxyacetone phosphate + NADH + H(+). The catalysed reaction is sn-glycerol 3-phosphate + NADP(+) = dihydroxyacetone phosphate + NADPH + H(+). The protein operates within membrane lipid metabolism; glycerophospholipid metabolism. Functionally, catalyzes the reduction of the glycolytic intermediate dihydroxyacetone phosphate (DHAP) to sn-glycerol 3-phosphate (G3P), the key precursor for phospholipid synthesis. The protein is Glycerol-3-phosphate dehydrogenase [NAD(P)+] of Streptococcus pyogenes serotype M28 (strain MGAS6180).